A 345-amino-acid chain; its full sequence is NADH-ubiquinone oxidoreductase chain 2 (345 aa).

Helical transmembrane passes span 1-21 (MNPITLAIIYFTIFLGPVITM), 25-45 (NLMLMWVGLEFSLLAIIPMLI), 56-76 (ATKYFVTQATASMIILLAIVL), 92-114 (GLILNMTLMALSMKLGLAPFHFW), 149-171 (LNSTIILMLAITSIFMGAWGGLN), 178-198 (IMAYSSIAHMGWMLAILPYNP), 200-220 (LTLLNLMIYIILTAPMFMALM), 241-261 (LTMISLMLLSLGGLPPLTGFL), 274-294 (NCLIMATLMAMMALLNLFFYT), and 324-344 (LMFSTLAIMSTMTLPLAPQLI).

Belongs to the complex I subunit 2 family. In terms of assembly, core subunit of respiratory chain NADH dehydrogenase (Complex I) which is composed of 45 different subunits. Interacts with TMEM242.

It localises to the mitochondrion inner membrane. The enzyme catalyses a ubiquinone + NADH + 5 H(+)(in) = a ubiquinol + NAD(+) + 4 H(+)(out). In terms of biological role, core subunit of the mitochondrial membrane respiratory chain NADH dehydrogenase (Complex I) which catalyzes electron transfer from NADH through the respiratory chain, using ubiquinone as an electron acceptor. Essential for the catalytic activity and assembly of complex I. This chain is NADH-ubiquinone oxidoreductase chain 2, found in Mus musculus (Mouse).